The following is a 48-amino-acid chain: GNCKCDDEGPYVRTAPLTGYVDLGYCNEGWEKCASYYSPIAECCRKKK.

3 disulfides stabilise this stretch: C3–C43, C5–C33, and C26–C44. Lysine amide; partial; in Delta-stichotoxin-Hcr1f is present on K48.

The protein belongs to the sea anemone sodium channel inhibitory toxin family. Type II subfamily. As to quaternary structure, probably composed of two peptide chains of 12 and 35 residues connected by two disulfide bonds (Cys-3-Cys-43 and Cys-5-Cys-33). Delta-SHTX-Hcr1f (RTX-VI) may be the result of post-translational modification of delta-SHTX-Hcr1a (RTX-III), which would consist of Arg-13 cleavage.

The protein resides in the secreted. Its subcellular location is the nematocyst. Functionally, binds to site 3 of voltage-gated sodium channels and inhibits the inactivation process. Specifically inhibits mammalian Nav1.3/SCN3A and Nav1.6/SCN8A sodium channels, as well as insect BgNav1 and VdNav1 sodium channels. In terms of biological role, binds to site 3 of voltage-gated sodium channels and inhibits the inactivation process. Specifically inhibits mammalian Nav1.2/SCN3A (low inhibition) and Nav1.6/SCN8A sodium channels, as well as insect BgNav1 and VdNav1 sodium channels. In Radianthus crispa (Leathery sea anemone), this protein is Delta-stichotoxin-Hcr1a.